The following is a 231-amino-acid chain: LexA repressor (231 aa).

The segment at residues 26–46 is a DNA-binding region (H-T-H motif); that stretch reads FDEMKDALDLRSKSGIHRLIT. Residues serine 152 and lysine 190 each act as for autocatalytic cleavage activity in the active site.

It belongs to the peptidase S24 family. As to quaternary structure, homodimer.

The enzyme catalyses Hydrolysis of Ala-|-Gly bond in repressor LexA.. Functionally, represses a number of genes involved in the response to DNA damage (SOS response), including recA and lexA. In the presence of single-stranded DNA, RecA interacts with LexA causing an autocatalytic cleavage which disrupts the DNA-binding part of LexA, leading to derepression of the SOS regulon and eventually DNA repair. This chain is LexA repressor, found in Bradyrhizobium diazoefficiens (strain JCM 10833 / BCRC 13528 / IAM 13628 / NBRC 14792 / USDA 110).